The following is a 1149-amino-acid chain: Transforming acidic coiled-coil-containing protein 2 (1149 aa).

Disordered stretches follow at residues 1 to 73 (MGNE…GSNQ), 91 to 227 (SASP…ASSG), and 247 to 430 (PCSA…VPLT). Residues 13–35 (TSSVQSPRSLQPPGKSQSLQKQQ) show a composition bias toward polar residues. The span at 91-106 (SASPSAARASPAPLAP) shows a compositional bias: low complexity. Position 100 is a phosphoserine (Ser-100). A compositionally biased stretch (pro residues) spans 155–180 (KAPPAPPPPPPEVTPEPEVIDPPAPE). Position 265 is a phosphoserine (Ser-265). Polar residues-rich tracts occupy residues 267–284 (ESVPPSKSTLSRSLSLQA) and 300–317 (TLTTDACGTGSNSASSTL). Positions 318–334 (KRTKKTRPPSLKKKQAT) are enriched in basic residues. Ser-354 carries the post-translational modification Phosphoserine. The segment covering 358–368 (SEEHLAPETKT) has biased composition (basic and acidic residues). A Phosphoserine modification is found at Ser-419. Thr-439 is subject to Phosphothreonine. The interval 463–617 (SEDKGSWESQ…PAKKKKTPLK (155 aa)) is disordered. A compositionally biased stretch (basic residues) spans 481–498 (KIGKKPVAKMPLRRPKMK). In terms of domain architecture, SPAZ spans 508 to 596 (PASPPRSPTE…SPASFEIPAS (89 aa)). 2 positions are modified to phosphoserine: Ser-510 and Ser-514. A Phosphothreonine modification is found at Thr-516. The span at 541–561 (NPFSSTSKMQESPKLSQQSYN) shows a compositional bias: polar residues. Residues Ser-552, Ser-582, Ser-585, Ser-587, and Ser-596 each carry the phosphoserine modification. Residues 575–590 (KASSKTPSSPSKSPAS) show a composition bias toward low complexity. Thr-632, Thr-653, and Thr-657 each carry phosphothreonine. Disordered regions lie at residues 636 to 665 (KKSPKRSPLSDPPSQDPTPAATPEAPSAIS) and 696 to 719 (DFPQPSDLSNFVNETKFNSPSEEL). Over residues 652–665 (PTPAATPEAPSAIS) the composition is skewed to low complexity. Residues 701–716 (SDLSNFVNETKFNSPS) are compositionally biased toward polar residues. Ser-714 and Ser-736 each carry phosphoserine. A Phosphothreonine modification is found at Thr-755. Positions 756 to 780 (PQESPVKSPPVRMSDSPTPCSGSSF) are disordered. Phosphoserine occurs at positions 759 and 771. Over residues 770-780 (DSPTPCSGSSF) the composition is skewed to polar residues. Coiled coils occupy residues 877 to 905 (AQKLQEELEFAVMRIEALKLARQIALASR) and 948 to 1148 (DLDS…KMGK).

It belongs to the TACC family. In terms of assembly, interacts with microtubules. Interacts with YEATS4, GCN5L2 and PCAF. Interacts with CCDC100/CEP120. Post-translationally, phosphorylated; which is required for localization in centrosome. As to expression, expressed in brain, kidney, lung, thymus and ovary. Not detectable in normal tissues at protein level.

It localises to the cytoplasm. The protein resides in the nucleus. It is found in the cytoskeleton. The protein localises to the microtubule organizing center. Its subcellular location is the centrosome. Its function is as follows. Plays a role in the microtubule-dependent coupling of the nucleus and the centrosome. Involved in the processes that regulate centrosome-mediated interkinetic nuclear migration (INM) of neural progenitors. May play a role in organizing centrosomal microtubules. This chain is Transforming acidic coiled-coil-containing protein 2 (Tacc2), found in Mus musculus (Mouse).